Reading from the N-terminus, the 398-residue chain is Stomatin-like protein 1 (398 aa).

Positions 6–10 (GYRAL) match the Tyrosine-type lysosomal sorting signal motif. A Phosphoserine modification is found at serine 28. A helical; Signal-anchor for type III membrane protein membrane pass occupies residues 58–78 (LISFLGFLLLLVTFPISGWFA). The Cytoplasmic portion of the chain corresponds to 79-398 (LKIVPTYERM…KLEAVLRALK (320 aa)). In terms of domain architecture, SCP2 spans 287–398 (KQPLAEGLLT…KLEAVLRALK (112 aa)).

This sequence belongs to the band 7/mec-2 family. As to quaternary structure, interacts with STOM; may redistribute STOM from the plasma membrane to late endosomes. Interacts with FBXW7 isoform 3 and CDK2. As to expression, ubiquitously expressed at low levels. Expression is highest in brain.

The protein resides in the membrane. It is found in the late endosome membrane. Its subcellular location is the membrane raft. The protein localises to the cell membrane. It localises to the cytoplasmic vesicle. Functionally, may play a role in cholesterol transfer to late endosomes. May play a role in modulating membrane acid-sensing ion channels. Can specifically inhibit proton-gated current of ASIC1 isoform 1. Can increase inactivation speed of ASIC3. May be involved in regulation of proton sensing in dorsal root ganglions. May play a role in protecting FBXW7 isoform 3 from degradation. The sequence is that of Stomatin-like protein 1 (STOML1) from Homo sapiens (Human).